Reading from the N-terminus, the 346-residue chain is Sulfate/thiosulfate import ATP-binding protein CysA (346 aa).

The ABC transporter domain occupies 3–237 (VRVANVRKEF…PNSPFVYGFI (235 aa)). ATP is bound at residue 35–42 (GPSGSGKT).

This sequence belongs to the ABC transporter superfamily. Sulfate/tungstate importer (TC 3.A.1.6) family. The complex is composed of two ATP-binding proteins (CysA), two transmembrane proteins (CysT and CysW) and a solute-binding protein (CysP).

It localises to the cell inner membrane. The enzyme catalyses sulfate(out) + ATP + H2O = sulfate(in) + ADP + phosphate + H(+). It carries out the reaction thiosulfate(out) + ATP + H2O = thiosulfate(in) + ADP + phosphate + H(+). Functionally, part of the ABC transporter complex CysAWTP involved in sulfate/thiosulfate import. Responsible for energy coupling to the transport system. This is Sulfate/thiosulfate import ATP-binding protein CysA from Mesorhizobium japonicum (strain LMG 29417 / CECT 9101 / MAFF 303099) (Mesorhizobium loti (strain MAFF 303099)).